The sequence spans 382 residues: Alcohol dehydrogenase 1 (382 aa).

Cysteine 49, threonine 51, histidine 71, cysteine 101, cysteine 104, cysteine 107, cysteine 115, and cysteine 179 together coordinate Zn(2+). An alcohol-binding residues include threonine 51 and histidine 71. Threonine 51 lines the NAD(+) pocket. NAD(+)-binding positions include 204–209 (GLGAVG), aspartate 228, arginine 233, threonine 275, valine 298, 298–300 (VGV), phenylalanine 325, and arginine 375.

Belongs to the zinc-containing alcohol dehydrogenase family. As to quaternary structure, homodimer. It depends on Zn(2+) as a cofactor.

Its subcellular location is the cytoplasm. The enzyme catalyses a primary alcohol + NAD(+) = an aldehyde + NADH + H(+). The catalysed reaction is a secondary alcohol + NAD(+) = a ketone + NADH + H(+). In terms of biological role, this protein is responsible for the conversion of alcohols to aldehydes in plants and is important for NAD metabolism during anaerobic respiration. The protein is Alcohol dehydrogenase 1 (ADH1) of Petunia hybrida (Petunia).